The sequence spans 365 residues: Mitogen-activated protein kinase 13 (365 aa).

Positions 25–308 (YVSPTHVGSG…AAQALTHPFF (284 aa)) constitute a Protein kinase domain. 31 to 39 (VGSGAYGSV) contributes to the ATP binding site. Phosphoserine is present on S47. ATP is bound at residue K54. D150 acts as the Proton acceptor in catalysis. At T180 the chain carries Phosphothreonine; by MAP2K3, MAP2K4, MAP2K6 and MAP2K7. A TXY motif is present at residues 180–182 (TGY). At Y182 the chain carries Phosphotyrosine; by MAP2K3, MAP2K4, MAP2K6 and MAP2K7. Position 350 is a phosphoserine (S350).

The protein belongs to the protein kinase superfamily. CMGC Ser/Thr protein kinase family. MAP kinase subfamily. Interacts with MAPK8IP2. Mg(2+) is required as a cofactor. Post-translationally, dually phosphorylated on Thr-180 and Tyr-182 by MAP2K3/MKK3, MAP2K4/MKK4, MAP2K6/MKK6 and MAP2K7/MKK7, which activates the enzyme. Dephosphorylated by dual specificity phosphatase DUSP1. Expressed in testes, pancreas, small intestine, lung and kidney. Abundant in macrophages, also present in neutrophils, CD4+ T-cells, and endothelial cells.

It catalyses the reaction L-seryl-[protein] + ATP = O-phospho-L-seryl-[protein] + ADP + H(+). It carries out the reaction L-threonyl-[protein] + ATP = O-phospho-L-threonyl-[protein] + ADP + H(+). Activated by phosphorylation on threonine and tyrosine by dual specificity kinases, MAP2K3/MKK3, MAP2K6/MKK6, MAP2K4/MKK4 and MAP2K7/MKK7. Activation by ultraviolet radiation, hyperosmotic shock, anisomycin or by TNF-alpha is mediated by MAP2K3/MKK3. Inhibited by dual specificity phosphatase DUSP1. In terms of biological role, serine/threonine kinase which acts as an essential component of the MAP kinase signal transduction pathway. MAPK13 is one of the four p38 MAPKs which play an important role in the cascades of cellular responses evoked by extracellular stimuli such as pro-inflammatory cytokines or physical stress leading to direct activation of transcription factors such as ELK1 and ATF2. Accordingly, p38 MAPKs phosphorylate a broad range of proteins and it has been estimated that they may have approximately 200 to 300 substrates each. MAPK13 is one of the less studied p38 MAPK isoforms. Some of the targets are downstream kinases such as MAPKAPK2, which are activated through phosphorylation and further phosphorylate additional targets. Plays a role in the regulation of protein translation by phosphorylating and inactivating EEF2K. Involved in cytoskeletal remodeling through phosphorylation of MAPT and STMN1. Mediates UV irradiation induced up-regulation of the gene expression of CXCL14. Plays an important role in the regulation of epidermal keratinocyte differentiation, apoptosis and skin tumor development. Phosphorylates the transcriptional activator MYB in response to stress which leads to rapid MYB degradation via a proteasome-dependent pathway. MAPK13 also phosphorylates and down-regulates PRKD1 during regulation of insulin secretion in pancreatic beta cells. The sequence is that of Mitogen-activated protein kinase 13 (MAPK13) from Homo sapiens (Human).